The chain runs to 75 residues: Putative antitoxin VapB12 (75 aa).

In terms of biological role, putative antitoxin component of a possible type II toxin-antitoxin (TA) system. The cognate toxin is VapC12. The sequence is that of Putative antitoxin VapB12 (vapB12) from Mycobacterium tuberculosis (strain CDC 1551 / Oshkosh).